Reading from the N-terminus, the 127-residue chain is Large ribosomal subunit protein uL22 (127 aa).

This sequence belongs to the universal ribosomal protein uL22 family. As to quaternary structure, part of the 50S ribosomal subunit.

Its function is as follows. This protein binds specifically to 23S rRNA; its binding is stimulated by other ribosomal proteins, e.g. L4, L17, and L20. It is important during the early stages of 50S assembly. It makes multiple contacts with different domains of the 23S rRNA in the assembled 50S subunit and ribosome. In terms of biological role, the globular domain of the protein is located near the polypeptide exit tunnel on the outside of the subunit, while an extended beta-hairpin is found that lines the wall of the exit tunnel in the center of the 70S ribosome. The protein is Large ribosomal subunit protein uL22 of Rhizorhabdus wittichii (strain DSM 6014 / CCUG 31198 / JCM 15750 / NBRC 105917 / EY 4224 / RW1) (Sphingomonas wittichii).